The primary structure comprises 1470 residues: Guanine nucleotide exchange factor subunit R06F6.8 (1470 aa).

WD repeat units follow at residues 20 to 58 (STAA…LLCS), 68 to 107 (ETRG…DEQC), and 472 to 512 (AYCS…VVGV). 4 disordered regions span residues 673–710 (QSQN…PMNQ), 975–1001 (FFRT…ADSS), 1017–1045 (RLNK…SKDK), and 1238–1259 (RSPS…SPSS). The segment covering 689–707 (SNVSIQSVSTSTTSEPSSP) has biased composition (low complexity). Residues 983–1001 (AKTSLSRRPTVSSPSADSS) show a composition bias toward polar residues. Basic and acidic residues predominate over residues 1028 to 1045 (EQKDAPRKDSIGGSSKDK). A helical membrane pass occupies residues 1294–1314 (LLLSLFSQTATIDWIFLFCLL). Residues 1385–1403 (SPDNENRKASQKTSADDPK) are compositionally biased toward basic and acidic residues. The disordered stretch occupies residues 1385–1447 (SPDNENRKAS…SADRAHKSVK (63 aa)). The segment covering 1411 to 1424 (SGSSKLNNSFSNPK) has biased composition (polar residues). Residues 1431-1447 (GRRERSRSADRAHKSVK) show a composition bias toward basic and acidic residues.

Belongs to the RIC1 family. As to quaternary structure, component of a guanine nucleotide exchange factor (GEF) complex.

The protein localises to the membrane. Functionally, probable component of a guanine nucleotide exchange factor (GEF) that may be required for efficient fusion of endosome-derived vesicles with the Golgi. This is Guanine nucleotide exchange factor subunit R06F6.8 from Caenorhabditis elegans.